The sequence spans 391 residues: GTPase Obg (391 aa).

Residues 1-159 (MKFLDQAKIF…IWVWLRLKLI (159 aa)) enclose the Obg domain. An OBG-type G domain is found at 160 to 327 (ADAGLIGLPN…VLRVMATHVD (168 aa)). GTP contacts are provided by residues 166–173 (GLPNAGKS), 191–195 (FTTLH), 212–215 (DIPG), 279–282 (SKID), and 308–310 (SAI). 2 residues coordinate Mg(2+): S173 and T193. Positions 352–391 (TGIDHGYNRPSAVVDWEDAPFDDDDDDDGDESGDKGQWTR) are disordered. A compositionally biased stretch (acidic residues) spans 366–382 (DWEDAPFDDDDDDDGDE).

Belongs to the TRAFAC class OBG-HflX-like GTPase superfamily. OBG GTPase family. As to quaternary structure, monomer. Mg(2+) is required as a cofactor.

The protein resides in the cytoplasm. Functionally, an essential GTPase which binds GTP, GDP and possibly (p)ppGpp with moderate affinity, with high nucleotide exchange rates and a fairly low GTP hydrolysis rate. Plays a role in control of the cell cycle, stress response, ribosome biogenesis and in those bacteria that undergo differentiation, in morphogenesis control. This Rhodospirillum rubrum (strain ATCC 11170 / ATH 1.1.1 / DSM 467 / LMG 4362 / NCIMB 8255 / S1) protein is GTPase Obg.